The chain runs to 444 residues: ATP-dependent protease ATPase subunit HslU (444 aa).

ATP contacts are provided by residues I20 and 62–67 (GVGKTE). The tract at residues 130–158 (EDRILDALVPPPRGASGEPERGEDNSARQ) is disordered. ATP is bound by residues D257, E322, and R394.

It belongs to the ClpX chaperone family. HslU subfamily. As to quaternary structure, a double ring-shaped homohexamer of HslV is capped on each side by a ring-shaped HslU homohexamer. The assembly of the HslU/HslV complex is dependent on binding of ATP.

It localises to the cytoplasm. In terms of biological role, ATPase subunit of a proteasome-like degradation complex; this subunit has chaperone activity. The binding of ATP and its subsequent hydrolysis by HslU are essential for unfolding of protein substrates subsequently hydrolyzed by HslV. HslU recognizes the N-terminal part of its protein substrates and unfolds these before they are guided to HslV for hydrolysis. The protein is ATP-dependent protease ATPase subunit HslU of Bordetella pertussis (strain Tohama I / ATCC BAA-589 / NCTC 13251).